We begin with the raw amino-acid sequence, 104 residues long: uncharacterized protein (104 aa).

The segment at 51 to 70 is disordered; sequence NPGRSLDNNKDVSDKGRSEF. The span at 57–70 shows a compositional bias: basic and acidic residues; that stretch reads DNNKDVSDKGRSEF.

Belongs to the protein-tyrosine phosphatase family.

This is an uncharacterized protein from Xanthomonas campestris pv. campestris (strain ATCC 33913 / DSM 3586 / NCPPB 528 / LMG 568 / P 25).